Reading from the N-terminus, the 233-residue chain is Large ribosomal subunit protein uL1 (233 aa).

The protein belongs to the universal ribosomal protein uL1 family. As to quaternary structure, part of the 50S ribosomal subunit.

In terms of biological role, binds directly to 23S rRNA. The L1 stalk is quite mobile in the ribosome, and is involved in E site tRNA release. Protein L1 is also a translational repressor protein, it controls the translation of the L11 operon by binding to its mRNA. This Geotalea uraniireducens (strain Rf4) (Geobacter uraniireducens) protein is Large ribosomal subunit protein uL1.